The primary structure comprises 324 residues: Aldo-keto reductase family 1 member C15 (324 aa).

Residues 24 to 26 (TFA) and D51 each bind NADP(+). Y56 acts as the Proton donor in catalysis. Residue H118 coordinates substrate. NADP(+)-binding positions include 167–168 (SN), Q191, 217–225 (YSALGSHRD), and 269–281 (LAKSFNEKRIKEN).

This sequence belongs to the aldo/keto reductase family. As to quaternary structure, monomer. As to expression, expressed in lung, specifically in bronchiolar club cells, type II alveolar cells and epithelial cells of the duct of the bronchial gland (at protein level). Expressed in gastric parietal cells and in epithelial cells of the large intestine and colon (at protein level). Expressed in brown adipocytes (at protein level). Expressed in vascular endothelial cells (at protein level).

The protein localises to the cytoplasm. It carries out the reaction (2E,6E)-farnesol + NADP(+) = (2E,6E)-farnesal + NADPH + H(+). With respect to regulation, the dehydrogenase activity is inhibited by 3',3'',5',5''-tetraiodophenolphthalein, phenolphthalein, genistein, quercetin, zearalenone and diethylstilbestrol. Its function is as follows. Catalyzes the NADPH-dependent reduction of a variety of substrates including aromatic and aliphatic aldehydes, quinones, ketones, dicarbonyl compounds and 17-ketosteroids. Catalyzes the NADP(+)-dependent oxidation of aromatic, alicyclic and aliphatic alcohols, and 17beta-hydroxysteroids. To a lesser extent, can also catalyze the reduction of some aldoses and ketoses and the oxidation of some sugar alcohols. In the stomach, lung and colon tissues, mediates the reduction of farnesal and geranylgeranial into farnesol and geranylgeraniol respectively. By reducing 4-hydroxy-2-nonenal (HNE), produced during lipid peroxidation, into 1,4-dihydro-2-nonene (DHN), protects vascular endothelial cells from damage elicited by oxidized lipoproteins. This chain is Aldo-keto reductase family 1 member C15, found in Rattus norvegicus (Rat).